Consider the following 288-residue polypeptide: Large ribosomal subunit protein uL2 (288 aa).

Residues 232–265 (GTAMNPVDHPHGGGEGKTKGKHPESPWGWKTKGY) form a disordered region. A compositionally biased stretch (basic and acidic residues) spans 239–255 (DHPHGGGEGKTKGKHPE).

The protein belongs to the universal ribosomal protein uL2 family. Part of the 50S ribosomal subunit. Forms a bridge to the 30S subunit in the 70S ribosome.

In terms of biological role, one of the primary rRNA binding proteins. Required for association of the 30S and 50S subunits to form the 70S ribosome, for tRNA binding and peptide bond formation. It has been suggested to have peptidyltransferase activity; this is somewhat controversial. Makes several contacts with the 16S rRNA in the 70S ribosome. The chain is Large ribosomal subunit protein uL2 from Hydrogenobaculum sp. (strain Y04AAS1).